We begin with the raw amino-acid sequence, 68 residues long: Metallothionein (68 aa).

A divalent metal cation-binding residues include C7, C9, C14, C16, C20, C22, C25, C27, C35, C39, C40, C42, C43, C47, C50, C54, C56, C64, C66, and C67.

It belongs to the metallothionein superfamily. Type 1 family.

Metallothioneins have a high content of cysteine residues that bind various heavy metals. The chain is Metallothionein (mt) from Scyliorhinus torazame (Cloudy catshark).